A 328-amino-acid polypeptide reads, in one-letter code: Carbonic anhydrase-related protein 11 (328 aa).

The N-terminal stretch at M1–A22 is a signal peptide. One can recognise an Alpha-carbonic anhydrase domain in the interval D33–R303. N118, N170, and N260 each carry an N-linked (GlcNAc...) asparagine glycan. Positions R300 to R328 are disordered. The span at L319–R328 shows a compositional bias: basic and acidic residues.

Belongs to the alpha-carbonic anhydrase family.

It localises to the secreted. In terms of biological role, does not have a catalytic activity. The protein is Carbonic anhydrase-related protein 11 (CA11) of Bos taurus (Bovine).